Consider the following 278-residue polypeptide: Shikimate dehydrogenase (NADP(+)) (278 aa).

Residues 19–21 and threonine 66 each bind shikimate; that span reads SFS. The Proton acceptor role is filled by lysine 70. Shikimate is bound by residues asparagine 91 and aspartate 106. NADP(+)-binding positions include 130-134 and leucine 222; that span reads GSGGA. Position 224 (tyrosine 224) interacts with shikimate. An NADP(+)-binding site is contributed by glycine 245.

The protein belongs to the shikimate dehydrogenase family. Homodimer.

It catalyses the reaction shikimate + NADP(+) = 3-dehydroshikimate + NADPH + H(+). It functions in the pathway metabolic intermediate biosynthesis; chorismate biosynthesis; chorismate from D-erythrose 4-phosphate and phosphoenolpyruvate: step 4/7. Functionally, involved in the biosynthesis of the chorismate, which leads to the biosynthesis of aromatic amino acids. Catalyzes the reversible NADPH linked reduction of 3-dehydroshikimate (DHSA) to yield shikimate (SA). The sequence is that of Shikimate dehydrogenase (NADP(+)) from Methanococcus maripaludis (strain DSM 14266 / JCM 13030 / NBRC 101832 / S2 / LL).